The sequence spans 67 residues: Surface composition regulator (67 aa).

This sequence belongs to the GlgS family.

In terms of biological role, major determinant of cell surface composition. Negatively regulates motility, adhesion and synthesis of biofilm exopolysaccharides. This is Surface composition regulator from Salmonella enteritidis PT4 (strain P125109).